The chain runs to 61 residues: Alpha-conotoxin EIIA (61 aa).

Residues 1–16 form the signal peptide; sequence MFIVFLLVVLATTVGS. Residues 17–40 constitute a propeptide that is removed on maturation; that stretch reads FTLDRVLEGRNAAAIDNALDQRDP. Glutamine 43 is modified (pyrrolidone carboxylic acid). At proline 45 the chain carries Hydroxyproline. 2 disulfide bridges follow: cysteine 47–cysteine 53 and cysteine 48–cysteine 58. Cysteine 58 is subject to Cysteine amide.

It belongs to the conotoxin A superfamily. Expressed by the venom duct.

Its subcellular location is the secreted. Its function is as follows. Alpha-conotoxins bind to the nicotinic acetylcholine receptors (nAChR) and inhibit them. This peptide potently blocks muscular nicotinic acetylcholine receptor (CHRNA1-CHRNB1-CHRNG-CHRND), and has no effect on neuronal receptors. It is able to totally displace [125I]-Bgtx from the Torpedo receptor with a complete inhibition in the high micromolar range. It produces a biphasic inhibition curve which fits nicely with a two-site model (Ki of 0.46 and 105 nM). The chain is Alpha-conotoxin EIIA from Conus ermineus (Agate cone).